We begin with the raw amino-acid sequence, 463 residues long: Putative WAS protein family homolog 3 (463 aa).

Residues 1–54 form a required for WASH complex assembly region; the sequence is MTPVRMQHSLAGQTYAVPLIQPDLRREEAVQQMADALQYLQKVSGDIFSRISQQ. The WHD1 stretch occupies residues 1–165; sequence MTPVRMQHSL…EGLGGLPSNI (165 aa). Residue K218 forms a Glycyl lysine isopeptide (Lys-Gly) (interchain with G-Cter in ubiquitin) linkage. The disordered stretch occupies residues 295–463; sequence QDGVLTPPPP…AEEDEDDWES (169 aa). Residues 300–312 are compositionally biased toward pro residues; the sequence is TPPPPPPPPPPAP. A VCA region spans residues 347 to 463; it reads QGAPREVVDP…AEEDEDDWES (117 aa). The WH2 domain occupies 359–381; that stretch reads GRATLLESIRQAGGIGKAKLRSM. A compositionally biased stretch (basic and acidic residues) spans 380 to 396; sequence SMKERKLEKKQQKEQEQ. Gly residues predominate over residues 422 to 434; it reads SGKGPGAGEGPGG. Residues 454–463 show a composition bias toward acidic residues; sequence AEEDEDDWES.

It belongs to the WASH1 family. Component of the WASH core complex also described as WASH regulatory complex (SHRC) composed of WASH (WASHC1, WASH2P or WASH3P), WASHC2 (WASHC2A or WASHC2C), WASHC3, WASHC4 and WASHC5. The WASH core complex associates with the F-actin-capping protein dimer (formed by CAPZA1, CAPZA2 or CAPZA3 and CAPZB) in a transient or substoichiometric manner which was initially described as WASH complex. Interacts (via WHD1 region) with WASHC2C; the interaction is direct. Interacts with alpha-tubulin. Interacts with BECN1; WASHC1 and AMBRA1 can competitively interact with BECN1. Interacts with BLOC1S2; may associate with the BLOC-1 complex. Interacts with tubulin gamma chain (TUBG1 or TUBG2). Interacts with EXOC1, EXOC4, EXOC8; in MMP14-positive endosomes in breast tumor cells; indicative for an association with the exocyst complex.

It localises to the early endosome. The protein resides in the early endosome membrane. Its subcellular location is the recycling endosome membrane. It is found in the cell projection. The protein localises to the lamellipodium. It localises to the filopodium. The protein resides in the cytoplasmic vesicle. Its subcellular location is the autophagosome. It is found in the cytoplasm. The protein localises to the cytoskeleton. It localises to the microtubule organizing center. The protein resides in the centrosome. Its subcellular location is the centriole. Its function is as follows. Acts as a nucleation-promoting factor at the surface of endosomes, where it recruits and activates the Arp2/3 complex to induce actin polymerization, playing a key role in the fission of tubules that serve as transport intermediates during endosome sorting. Involved in endocytic trafficking of EGF. Involved in transferrin receptor recycling. Regulates the trafficking of endosomal alpha5beta1 integrin to the plasma membrane and involved in invasive cell migration. In T-cells involved in endosome-to-membrane recycling of receptors including T-cell receptor (TCR), CD28 and ITGAL; proposed to be implicated in T cell proliferation and effector function. In dendritic cells involved in endosome-to-membrane recycling of major histocompatibility complex (MHC) class II probably involving retromer and subsequently allowing antigen sampling, loading and presentation during T-cell activation. Involved in Arp2/3 complex-dependent actin assembly driving Salmonella typhimurium invasion independent of ruffling. Involved in the exocytosis of MMP14 leading to matrix remodeling during invasive migration and implicating late endosome-to-plasma membrane tubular connections and cooperation with the exocyst complex. Involved in negative regulation of autophagy independently from its role in endosomal sorting by inhibiting BECN1 ubiquitination to inactivate PIK3C3/Vps34 activity. This chain is Putative WAS protein family homolog 3 (WASH3P), found in Homo sapiens (Human).